The primary structure comprises 416 residues: Probable protein phosphatase 2C 75 (416 aa).

Disordered stretches follow at residues 1–20 (MTEI…SPTK) and 32–51 (RRQA…DRTD). Positions 108-411 (LYGIVSVMGR…DNISVVVIDL (304 aa)) constitute a PPM-type phosphatase domain. The Mn(2+) site is built by aspartate 149, glycine 150, aspartate 337, and aspartate 402.

This sequence belongs to the PP2C family. Mg(2+) serves as cofactor. The cofactor is Mn(2+).

The enzyme catalyses O-phospho-L-seryl-[protein] + H2O = L-seryl-[protein] + phosphate. It catalyses the reaction O-phospho-L-threonyl-[protein] + H2O = L-threonyl-[protein] + phosphate. Its function is as follows. Negative regulator of abscisic acid (ABA) responses during seed germination. The chain is Probable protein phosphatase 2C 75 (AHG1) from Arabidopsis thaliana (Mouse-ear cress).